We begin with the raw amino-acid sequence, 350 residues long: Beta-ketodecanoyl-[acyl-carrier-protein] synthase (350 aa).

Residue Cys-133 is part of the active site.

The protein belongs to the thiolase-like superfamily. Beta-ketoacyl-ACP synthases family.

The enzyme catalyses octanoyl-CoA + malonyl-[ACP] + H(+) = 3-oxodecanoyl-[ACP] + CO2 + CoA. The protein operates within lipid metabolism; fatty acid biosynthesis. Functionally, catalyzes the condensation of octanoyl-CoA, obtained from exogenously supplied fatty acids via beta-oxidation, with malonyl-[acyl-carrier protein], forming 3-oxodecanoyl-[acyl-carrier protein], an intermediate of the fatty acid elongation cycle that can then be extended to supply all of the cellular fatty acid needs. The enzyme thereby shunts fatty acid degradation intermediates from the beta-oxidation pathway into de novo fatty acid biosynthesis. The sequence is that of Beta-ketodecanoyl-[acyl-carrier-protein] synthase from Pseudomonas aeruginosa (strain ATCC 15692 / DSM 22644 / CIP 104116 / JCM 14847 / LMG 12228 / 1C / PRS 101 / PAO1).